The chain runs to 469 residues: Neuraminidase (469 aa).

Residues 1–9 (MNPNQKIIT) are Intravirion-facing. The helical transmembrane segment at 10 to 30 (IGSVSLIIATICFLMQIAILV) threads the bilayer. Positions 11 to 33 (GSVSLIIATICFLMQIAILVTTV) are involved in apical transport and lipid raft association. Over 31–469 (TTVTLHFKQY…DGADINLMPI (439 aa)) the chain is Virion surface. The tract at residues 36–88 (HFKQYECDSPANNQVMPCEPIIIERNITEIVYLTNTTIEKEICPKLVEYRNWS) is hypervariable stalk region. 3 N-linked (GlcNAc...) asparagine; by host glycosylation sites follow: Asn-61, Asn-70, and Asn-86. The tract at residues 91–469 (QCKITGFAPF…DGADINLMPI (379 aa)) is head of neuraminidase. Intrachain disulfides connect Cys-92–Cys-417, Cys-124–Cys-129, Cys-183–Cys-230, Cys-232–Cys-237, Cys-278–Cys-291, Cys-280–Cys-289, Cys-318–Cys-337, and Cys-421–Cys-447. Residue Arg-118 coordinates substrate. Asn-146 carries an N-linked (GlcNAc...) asparagine; by host glycan. The active-site Proton donor/acceptor is Asp-151. Residue Arg-152 participates in substrate binding. N-linked (GlcNAc...) asparagine; by host glycans are attached at residues Asn-200 and Asn-234. 276–277 (EE) is a binding site for substrate. Arg-292 is a substrate binding site. Ca(2+) contacts are provided by Asp-293, Gly-297, and Asp-324. Arg-371 is a substrate binding site. Asn-402 carries an N-linked (GlcNAc...) asparagine; by host glycan. Tyr-406 acts as the Nucleophile in catalysis.

Belongs to the glycosyl hydrolase 34 family. Homotetramer. Ca(2+) serves as cofactor. N-glycosylated.

The protein resides in the virion membrane. It is found in the host apical cell membrane. The catalysed reaction is Hydrolysis of alpha-(2-&gt;3)-, alpha-(2-&gt;6)-, alpha-(2-&gt;8)- glycosidic linkages of terminal sialic acid residues in oligosaccharides, glycoproteins, glycolipids, colominic acid and synthetic substrates.. With respect to regulation, inhibited by the neuraminidase inhibitors zanamivir (Relenza) and oseltamivir (Tamiflu). These drugs interfere with the release of progeny virus from infected cells and are effective against all influenza strains. Resistance to neuraminidase inhibitors is quite rare. Its function is as follows. Catalyzes the removal of terminal sialic acid residues from viral and cellular glycoconjugates. Cleaves off the terminal sialic acids on the glycosylated HA during virus budding to facilitate virus release. Additionally helps virus spread through the circulation by further removing sialic acids from the cell surface. These cleavages prevent self-aggregation and ensure the efficient spread of the progeny virus from cell to cell. Otherwise, infection would be limited to one round of replication. Described as a receptor-destroying enzyme because it cleaves a terminal sialic acid from the cellular receptors. May facilitate viral invasion of the upper airways by cleaving the sialic acid moieties on the mucin of the airway epithelial cells. Likely to plays a role in the budding process through its association with lipid rafts during intracellular transport. May additionally display a raft-association independent effect on budding. Plays a role in the determination of host range restriction on replication and virulence. Sialidase activity in late endosome/lysosome traffic seems to enhance virus replication. The polypeptide is Neuraminidase (Aves (whales)).